We begin with the raw amino-acid sequence, 360 residues long: Peptide chain release factor 1 (360 aa).

Gln234 carries the N5-methylglutamine modification.

Belongs to the prokaryotic/mitochondrial release factor family. Methylated by PrmC. Methylation increases the termination efficiency of RF1.

It is found in the cytoplasm. Functionally, peptide chain release factor 1 directs the termination of translation in response to the peptide chain termination codons UAG and UAA. This is Peptide chain release factor 1 from Clostridium botulinum (strain Eklund 17B / Type B).